The primary structure comprises 280 residues: 4-hydroxy-3-methylbut-2-enyl diphosphate reductase (280 aa).

C12 contributes to the [4Fe-4S] cluster binding site. Residues H40 and H72 each contribute to the (2E)-4-hydroxy-3-methylbut-2-enyl diphosphate site. Dimethylallyl diphosphate-binding residues include H40 and H72. Residues H40 and H72 each contribute to the isopentenyl diphosphate site. C94 is a [4Fe-4S] cluster binding site. Residue H122 participates in (2E)-4-hydroxy-3-methylbut-2-enyl diphosphate binding. H122 is a binding site for dimethylallyl diphosphate. H122 provides a ligand contact to isopentenyl diphosphate. The active-site Proton donor is the E124. T160 contributes to the (2E)-4-hydroxy-3-methylbut-2-enyl diphosphate binding site. Residue C188 participates in [4Fe-4S] cluster binding. Residues S216, N218, and S260 each contribute to the (2E)-4-hydroxy-3-methylbut-2-enyl diphosphate site. Dimethylallyl diphosphate is bound by residues S216, N218, and S260. S216, N218, and S260 together coordinate isopentenyl diphosphate.

The protein belongs to the IspH family. Requires [4Fe-4S] cluster as cofactor.

The enzyme catalyses isopentenyl diphosphate + 2 oxidized [2Fe-2S]-[ferredoxin] + H2O = (2E)-4-hydroxy-3-methylbut-2-enyl diphosphate + 2 reduced [2Fe-2S]-[ferredoxin] + 2 H(+). It catalyses the reaction dimethylallyl diphosphate + 2 oxidized [2Fe-2S]-[ferredoxin] + H2O = (2E)-4-hydroxy-3-methylbut-2-enyl diphosphate + 2 reduced [2Fe-2S]-[ferredoxin] + 2 H(+). Its pathway is isoprenoid biosynthesis; dimethylallyl diphosphate biosynthesis; dimethylallyl diphosphate from (2E)-4-hydroxy-3-methylbutenyl diphosphate: step 1/1. The protein operates within isoprenoid biosynthesis; isopentenyl diphosphate biosynthesis via DXP pathway; isopentenyl diphosphate from 1-deoxy-D-xylulose 5-phosphate: step 6/6. Its function is as follows. Catalyzes the conversion of 1-hydroxy-2-methyl-2-(E)-butenyl 4-diphosphate (HMBPP) into a mixture of isopentenyl diphosphate (IPP) and dimethylallyl diphosphate (DMAPP). Acts in the terminal step of the DOXP/MEP pathway for isoprenoid precursor biosynthesis. The chain is 4-hydroxy-3-methylbut-2-enyl diphosphate reductase from Pelobacter propionicus (strain DSM 2379 / NBRC 103807 / OttBd1).